The sequence spans 360 residues: Peptide chain release factor 1 (360 aa).

Residue Q235 is modified to N5-methylglutamine.

The protein belongs to the prokaryotic/mitochondrial release factor family. Methylated by PrmC. Methylation increases the termination efficiency of RF1.

It is found in the cytoplasm. Functionally, peptide chain release factor 1 directs the termination of translation in response to the peptide chain termination codons UAG and UAA. The polypeptide is Peptide chain release factor 1 (Janthinobacterium sp. (strain Marseille) (Minibacterium massiliensis)).